A 353-amino-acid polypeptide reads, in one-letter code: Ubiquinol oxidase 1, mitochondrial (353 aa).

The transit peptide at 1–69 directs the protein to the mitochondrion; it reads MMTRGATRMT…RHFPVMGSRS (69 aa). Positions 77–99 are disordered; sequence DKQHDKKAENGSAAATGGGDGGD. The helical transmembrane segment at 178–198 threads the bilayer; the sequence is AMMLETVAAVPGMVGGMLLHC. Residues Glu182, Glu221, and His224 each contribute to the Fe cation site. A helical transmembrane segment spans residues 240 to 260; sequence ALVFAVQGVFFNAYFVTYLLS. Residues Glu272, Glu323, and His326 each coordinate Fe cation.

Belongs to the alternative oxidase family. Homodimer; disulfide-linked. The cofactor is Fe cation.

The protein resides in the mitochondrion inner membrane. The enzyme catalyses 2 a ubiquinol + O2 = 2 a ubiquinone + 2 H2O. Stimulated by reduction of the disulfide bond and the presence of pyruvate. Its function is as follows. Catalyzes the cyanide-resistant oxidation of ubiquinol and the reduction of molecular oxygen to water, but does not translocate protons and consequently is not linked to oxidative phosphorylation. May increase respiration when the cytochrome respiratory pathway is restricted, or in response to low temperatures. The protein is Ubiquinol oxidase 1, mitochondrial (AOX1) of Nicotiana tabacum (Common tobacco).